The following is a 43-amino-acid chain: Protein PsbN (43 aa).

The chain crosses the membrane as a helical span at residues 5–27 (TLVTIFISGSLVSFTGYALYTAF).

This sequence belongs to the PsbN family.

Its subcellular location is the plastid. It is found in the chloroplast thylakoid membrane. Functionally, may play a role in photosystem I and II biogenesis. The sequence is that of Protein PsbN from Piper cenocladum (Ant piper).